The sequence spans 265 residues: tRNA pseudouridine synthase A (265 aa).

Catalysis depends on Asp-53, which acts as the Nucleophile. Tyr-111 contributes to the substrate binding site.

This sequence belongs to the tRNA pseudouridine synthase TruA family. Homodimer.

It carries out the reaction uridine(38/39/40) in tRNA = pseudouridine(38/39/40) in tRNA. In terms of biological role, formation of pseudouridine at positions 38, 39 and 40 in the anticodon stem and loop of transfer RNAs. The chain is tRNA pseudouridine synthase A from Acinetobacter baumannii (strain ATCC 17978 / DSM 105126 / CIP 53.77 / LMG 1025 / NCDC KC755 / 5377).